We begin with the raw amino-acid sequence, 99 residues long: Phosphoribosyl-ATP pyrophosphatase (99 aa).

The protein belongs to the PRA-PH family.

It is found in the cytoplasm. It carries out the reaction 1-(5-phospho-beta-D-ribosyl)-ATP + H2O = 1-(5-phospho-beta-D-ribosyl)-5'-AMP + diphosphate + H(+). It participates in amino-acid biosynthesis; L-histidine biosynthesis; L-histidine from 5-phospho-alpha-D-ribose 1-diphosphate: step 2/9. The polypeptide is Phosphoribosyl-ATP pyrophosphatase (Methanococcoides burtonii (strain DSM 6242 / NBRC 107633 / OCM 468 / ACE-M)).